The primary structure comprises 39 residues: Photosystem II reaction center protein J (39 aa).

The chain crosses the membrane as a helical span at residues 9-29 (LWLVGLVGGFAVITIVSLFIY).

Belongs to the PsbJ family. As to quaternary structure, PSII is composed of 1 copy each of membrane proteins PsbA, PsbB, PsbC, PsbD, PsbE, PsbF, PsbH, PsbI, PsbJ, PsbK, PsbL, PsbM, PsbT, PsbX, PsbY, PsbZ, Psb30/Ycf12, at least 3 peripheral proteins of the oxygen-evolving complex and a large number of cofactors. It forms dimeric complexes.

It is found in the plastid. The protein resides in the chloroplast thylakoid membrane. In terms of biological role, one of the components of the core complex of photosystem II (PSII). PSII is a light-driven water:plastoquinone oxidoreductase that uses light energy to abstract electrons from H(2)O, generating O(2) and a proton gradient subsequently used for ATP formation. It consists of a core antenna complex that captures photons, and an electron transfer chain that converts photonic excitation into a charge separation. The polypeptide is Photosystem II reaction center protein J (Thalassiosira pseudonana (Marine diatom)).